Here is a 319-residue protein sequence, read N- to C-terminus: Acetyl-coenzyme A carboxylase carboxyl transferase subunit alpha (319 aa).

The region spanning 38–293 (HALQDKLRMR…KAVLLNELDA (256 aa)) is the CoA carboxyltransferase C-terminal domain.

The protein belongs to the AccA family. In terms of assembly, acetyl-CoA carboxylase is a heterohexamer composed of biotin carboxyl carrier protein (AccB), biotin carboxylase (AccC) and two subunits each of ACCase subunit alpha (AccA) and ACCase subunit beta (AccD).

It is found in the cytoplasm. The enzyme catalyses N(6)-carboxybiotinyl-L-lysyl-[protein] + acetyl-CoA = N(6)-biotinyl-L-lysyl-[protein] + malonyl-CoA. Its pathway is lipid metabolism; malonyl-CoA biosynthesis; malonyl-CoA from acetyl-CoA: step 1/1. Component of the acetyl coenzyme A carboxylase (ACC) complex. First, biotin carboxylase catalyzes the carboxylation of biotin on its carrier protein (BCCP) and then the CO(2) group is transferred by the carboxyltransferase to acetyl-CoA to form malonyl-CoA. This chain is Acetyl-coenzyme A carboxylase carboxyl transferase subunit alpha, found in Stenotrophomonas maltophilia (strain K279a).